A 189-amino-acid chain; its full sequence is Orcokinin peptides (189 aa).

A signal peptide spans 1-21 (MRGAGGALAVAVAALLVCCSA). Propeptides lie at residues 22–124 (DPHQ…TFVK) and 145–174 (FYHLSSFDKKRYRADYPMDEIDLSHFPIGS).

This sequence belongs to the orcokinin family. As to expression, orcokinin-like peptide: Expressed in corpora cardiaca (CC), corpora allata (CA), antennal lobe (AL) and gnathal ganglion (GNG) (at protein level). Expression in CC, CA and GNG detected in some animals, in AL in few animals (at protein level). Orcokinin-like peptide precursor-related peptide: Expressed in corpora cardiaca (CC), corpora allata (CA), antennal lobe (AL) and gnathal ganglion (GNG) (at protein level). Expression in GNG detected in most animals, expression in CC, CA and AL detected in some animals (at protein level).

It is found in the secreted. Functionally, myotropic peptides. This is Orcokinin peptides from Agrotis ipsilon (Black cutworm moth).